A 493-amino-acid polypeptide reads, in one-letter code: MFS-type transporter efuF (493 aa).

Transmembrane regions (helical) follow at residues 90–110 (ITLV…NMLL), 117–137 (IMLP…CAVH), 147–167 (LLMG…LTTF), 179–199 (IFYG…YGVF), 211–231 (FLMI…YWHL), 279–299 (IALY…VGNF), 316–336 (LYTV…CTSS), 343–363 (STHL…LITL), 370–390 (GPTY…SCIF), 406–426 (AVTG…SLAF), and 435–455 (IPAL…VLGF).

It belongs to the major facilitator superfamily.

The protein localises to the membrane. Its function is as follows. MFS-type transporter; part of the gene cluster that mediates the biosynthesis of enfumafungin, a glycosylated fernene-type triterpenoid with potent antifungal activity, mediated by its interaction with beta-1,3-glucan synthase and the fungal cell wall. Might facilitate the transport of glucose units to the subcellular site of enfumafungin biosynthesis. This Hormonema carpetanum protein is MFS-type transporter efuF.